Here is a 754-residue protein sequence, read N- to C-terminus: Anaphase-promoting complex subunit cdh1 (754 aa).

Residues 1-10 are compositionally biased toward basic and acidic residues; it reads MFHSEYEKKL. Disordered regions lie at residues 1-30, 47-116, and 200-351; these read MFHS…YSNN, YEDN…TTTT, and IFNN…NNNN. Composition is skewed to low complexity over residues 50 to 116 and 202 to 325; these read NGSN…TTTT and NNNN…ININ. Residues 326-339 are compositionally biased toward polar residues; that stretch reads QSPSKKQSLMSATM. Positions 340 to 351 are enriched in low complexity; sequence NNNNSNNNNNNN. WD repeat units follow at residues 411–448, 452–492, 495–532, and 537–576; these read KDDF…VSKL, ESGQ…KIRE, GHNT…NNYT, and GHRH…QPQQ. Positions 570–598 are disordered; sequence MTQQPQQQHQPPPPPPSSNTSSISQQQQQ. Over residues 587–598 the composition is skewed to low complexity; the sequence is SNTSSISQQQQQ. WD repeat units follow at residues 610–652, 654–695, and 698–737; these read FHYA…SIQS, DTGS…PVTT, and GHTM…KESS.

Belongs to the WD repeat CDC20/Fizzy family. The APC/C is composed of at least 13 subunits that stay tightly associated throughout the cell cycle: anapc1, anapc2, anapc3, anapc4, anapc5, anapc6, anapc7, anapc8, anapc10, anapc11, cdc20, cdc26 and cdh1.

The protein resides in the nucleus. It participates in protein modification; protein ubiquitination. Its function is as follows. Component of the anaphase promoting complex/cyclosome (APC/C), a cell cycle-regulated E3 ubiquitin-protein ligase complex that controls progression through mitosis and the G1 phase of the cell cycle. The polypeptide is Anaphase-promoting complex subunit cdh1 (cdh1) (Dictyostelium discoideum (Social amoeba)).